We begin with the raw amino-acid sequence, 173 residues long: Photosystem I assembly protein Ycf3 (173 aa).

TPR repeat units lie at residues 35-68 (AYLY…EDNQ), 72-105 (GETL…NPKQ), and 120-153 (GRMA…YPGG).

It belongs to the Ycf3 family.

It is found in the cellular thylakoid membrane. Essential for the assembly of the photosystem I (PSI) complex. May act as a chaperone-like factor to guide the assembly of the PSI subunits. This chain is Photosystem I assembly protein Ycf3, found in Prochlorococcus marinus (strain NATL2A).